Here is a 179-residue protein sequence, read N- to C-terminus: Small ribosomal subunit protein uS5 (179 aa).

The region spanning 22-85 (MIEKLVAVNR…EYARKRMSNV (64 aa)) is the S5 DRBM domain.

The protein belongs to the universal ribosomal protein uS5 family. As to quaternary structure, part of the 30S ribosomal subunit. Contacts proteins S4 and S8.

Functionally, with S4 and S12 plays an important role in translational accuracy. Its function is as follows. Located at the back of the 30S subunit body where it stabilizes the conformation of the head with respect to the body. In Xylella fastidiosa (strain M23), this protein is Small ribosomal subunit protein uS5.